A 204-amino-acid polypeptide reads, in one-letter code: 3-isopropylmalate dehydratase small subunit (204 aa).

Belongs to the LeuD family. LeuD type 1 subfamily. In terms of assembly, heterodimer of LeuC and LeuD.

It carries out the reaction (2R,3S)-3-isopropylmalate = (2S)-2-isopropylmalate. The protein operates within amino-acid biosynthesis; L-leucine biosynthesis; L-leucine from 3-methyl-2-oxobutanoate: step 2/4. In terms of biological role, catalyzes the isomerization between 2-isopropylmalate and 3-isopropylmalate, via the formation of 2-isopropylmaleate. The sequence is that of 3-isopropylmalate dehydratase small subunit from Vesicomyosocius okutanii subsp. Calyptogena okutanii (strain HA).